The sequence spans 481 residues: Glutamyl-tRNA(Gln) amidotransferase subunit A (481 aa).

Active-site charge relay system residues include lysine 74 and serine 149. Serine 173 acts as the Acyl-ester intermediate in catalysis.

The protein belongs to the amidase family. GatA subfamily. Heterotrimer of A, B and C subunits.

It catalyses the reaction L-glutamyl-tRNA(Gln) + L-glutamine + ATP + H2O = L-glutaminyl-tRNA(Gln) + L-glutamate + ADP + phosphate + H(+). In terms of biological role, allows the formation of correctly charged Gln-tRNA(Gln) through the transamidation of misacylated Glu-tRNA(Gln) in organisms which lack glutaminyl-tRNA synthetase. The reaction takes place in the presence of glutamine and ATP through an activated gamma-phospho-Glu-tRNA(Gln). The protein is Glutamyl-tRNA(Gln) amidotransferase subunit A of Francisella tularensis subsp. mediasiatica (strain FSC147).